The following is a 190-amino-acid chain: dITP/XTP pyrophosphatase (190 aa).

Residue 10 to 15 participates in substrate binding; that stretch reads TTNKHK. 2 residues coordinate Mg(2+): E39 and D68. The Proton acceptor role is filled by D68. Residues A69, 143–146, K166, and 171–172 each bind substrate; these read FGYD and HR.

It belongs to the HAM1 NTPase family. As to quaternary structure, homodimer. The cofactor is Mg(2+).

It catalyses the reaction XTP + H2O = XMP + diphosphate + H(+). The enzyme catalyses dITP + H2O = dIMP + diphosphate + H(+). It carries out the reaction ITP + H2O = IMP + diphosphate + H(+). In terms of biological role, pyrophosphatase that catalyzes the hydrolysis of nucleoside triphosphates to their monophosphate derivatives, with a high preference for the non-canonical purine nucleotides XTP (xanthosine triphosphate), dITP (deoxyinosine triphosphate) and ITP. Seems to function as a house-cleaning enzyme that removes non-canonical purine nucleotides from the nucleotide pool, thus preventing their incorporation into DNA/RNA and avoiding chromosomal lesions. This Hyperthermus butylicus (strain DSM 5456 / JCM 9403 / PLM1-5) protein is dITP/XTP pyrophosphatase.